The chain runs to 288 residues: Light-independent protochlorophyllide reductase iron-sulfur ATP-binding protein (288 aa).

ATP-binding positions include 10-15 (GIGKST) and Lys-39. Residue Ser-14 participates in Mg(2+) binding. Cys-95 and Cys-129 together coordinate [4Fe-4S] cluster. 180-181 (NR) is a binding site for ATP.

Belongs to the NifH/BchL/ChlL family. As to quaternary structure, homodimer. Protochlorophyllide reductase is composed of three subunits; ChlL, ChlN and ChlB. [4Fe-4S] cluster serves as cofactor.

It carries out the reaction chlorophyllide a + oxidized 2[4Fe-4S]-[ferredoxin] + 2 ADP + 2 phosphate = protochlorophyllide a + reduced 2[4Fe-4S]-[ferredoxin] + 2 ATP + 2 H2O. It functions in the pathway porphyrin-containing compound metabolism; chlorophyll biosynthesis (light-independent). Functionally, component of the dark-operative protochlorophyllide reductase (DPOR) that uses Mg-ATP and reduced ferredoxin to reduce ring D of protochlorophyllide (Pchlide) to form chlorophyllide a (Chlide). This reaction is light-independent. The L component serves as a unique electron donor to the NB-component of the complex, and binds Mg-ATP. This Nostoc punctiforme (strain ATCC 29133 / PCC 73102) protein is Light-independent protochlorophyllide reductase iron-sulfur ATP-binding protein.